Here is a 351-residue protein sequence, read N- to C-terminus: Dihydroorotate dehydrogenase (quinone) (351 aa).

Residues 61 to 65 (AGLDK) and T85 contribute to the FMN site. K65 provides a ligand contact to substrate. 110 to 114 (NRMGF) contacts substrate. N139 and N172 together coordinate FMN. A substrate-binding site is contributed by N172. The active-site Nucleophile is the S175. Position 177 (N177) interacts with substrate. The FMN site is built by K217 and T245. Residue 246 to 247 (NT) coordinates substrate. FMN is bound by residues G268, G297, and 318-319 (YT).

This sequence belongs to the dihydroorotate dehydrogenase family. Type 2 subfamily. Monomer. FMN is required as a cofactor.

The protein localises to the cell membrane. It catalyses the reaction (S)-dihydroorotate + a quinone = orotate + a quinol. The protein operates within pyrimidine metabolism; UMP biosynthesis via de novo pathway; orotate from (S)-dihydroorotate (quinone route): step 1/1. In terms of biological role, catalyzes the conversion of dihydroorotate to orotate with quinone as electron acceptor. In Xylella fastidiosa (strain M23), this protein is Dihydroorotate dehydrogenase (quinone).